Consider the following 1400-residue polypeptide: Clustered mitochondria protein homolog (1400 aa).

Disordered regions lie at residues 1-39 (MVSK…KEAS), 56-78 (GHDQ…QAED), and 212-243 (GDTG…KERP). Basic and acidic residues predominate over residues 56-69 (GHDQAEEADSKQDG). In terms of domain architecture, Clu spans 380–622 (RAEDAYTSRL…RTFPPDLNFL (243 aa)). Residues 684 to 741 (AALQDSNAAGAGSENKPLALESCDGTPDSPTSSESTLTPEDSEATTVSENSSAENQEA) form a disordered region. Residues 707-722 (DGTPDSPTSSESTLTP) show a composition bias toward low complexity. Residues 727–741 (ATTVSENSSAENQEA) show a composition bias toward polar residues. TPR repeat units follow at residues 1088-1121 (AFHF…FNNV), 1130-1163 (CACL…SERV), 1172-1205 (IQEY…MLVV), and 1214-1247 (ALLD…NTKY). Residues 1377–1388 (QDSGKIQEQQGS) are compositionally biased toward polar residues. The tract at residues 1377–1400 (QDSGKIQEQQGSHLELDDKLPVDD) is disordered. Positions 1390 to 1400 (LELDDKLPVDD) are enriched in basic and acidic residues.

The protein belongs to the CLU family.

The protein resides in the cytoplasm. In terms of biological role, mRNA-binding protein involved in proper cytoplasmic distribution of mitochondria. The sequence is that of Clustered mitochondria protein homolog from Danio rerio (Zebrafish).